A 408-amino-acid polypeptide reads, in one-letter code: Putative glutamate--cysteine ligase 2 (408 aa).

This sequence belongs to the glutamate--cysteine ligase type 2 family. YbdK subfamily.

The catalysed reaction is L-cysteine + L-glutamate + ATP = gamma-L-glutamyl-L-cysteine + ADP + phosphate + H(+). Functionally, ATP-dependent carboxylate-amine ligase which exhibits weak glutamate--cysteine ligase activity. The protein is Putative glutamate--cysteine ligase 2 of Bradyrhizobium sp. (strain ORS 278).